Here is a 757-residue protein sequence, read N- to C-terminus: Polyribonucleotide nucleotidyltransferase (757 aa).

Mg(2+) is bound by residues aspartate 525 and aspartate 531. Residues 591–650 enclose the KH domain; sequence PRVISVNIPVDKIGELIGPKGKTINAIQDETGADISIEEDGTVYIGAVDGPSADAARAQV. An S1 motif domain is found at 662-734; that stretch reads GESFLGTVVK…DRGKLSLAPV (73 aa). Positions 737 to 757 are disordered; it reads ETADQEGRDAASHGSEAPAEG.

Belongs to the polyribonucleotide nucleotidyltransferase family. Mg(2+) is required as a cofactor.

It localises to the cytoplasm. It carries out the reaction RNA(n+1) + phosphate = RNA(n) + a ribonucleoside 5'-diphosphate. Involved in mRNA degradation. Catalyzes the phosphorolysis of single-stranded polyribonucleotides processively in the 3'- to 5'-direction. In Clavibacter michiganensis subsp. michiganensis (strain NCPPB 382), this protein is Polyribonucleotide nucleotidyltransferase.